The primary structure comprises 397 residues: MDVLYSLSKTLKDARDKIVEGTLYSNVSDLIQQFNQMIITMNGNEFQTGGIGNLPTRNWSFDFGLLGTTLLNLDANYVETARNTIDYFVDFVDNVCMDEMVRESQRNGIAPQSESLRKLSGIKFKRINFDNSSEYIENWNLQNRRQRTGFTFHKPNIFPYSASFTLNRSQPAHDNLMGTMWLNAGSEIQVAGFDYSCAINAPANIQQFEHIVQLRRVLTTATITLLPDAERFSFPRVINSADGATTWYFNPVILRPNNVEVEFLLNGQIINTYQARFGTIVARNFDTIRLSFQLMRPPNMTPSVAALFPNAQPFEHHATVGLTLRIESAVCESVLADASETMLANVTSVRQEYAIPVGPVFPPGMNWTDLITNYSPSREDNLQRVFTVASIRSMLVK.

The segment at 62–73 (DFGLLGTTLLNL) is interaction with the inner capsid protein VP2. His-153 serves as a coordination point for Zn(2+). Positions 266 and 286 each coordinate Ca(2+).

Belongs to the rotavirus VP6 family. As to quaternary structure, homotrimer. Interacts with the inner capsid protein VP2. Interacts with the outer capsid glycoprotein VP7. Interacts with the outer capsid protein VP5*. Post-translationally, the N-terminus is blocked. In terms of processing, sumoylated with SUMO1 and SUMO2. Sumoylation of viral proteins seems to have a positive role on viral replication.

The protein localises to the virion. In terms of biological role, intermediate capsid protein that self assembles to form an icosahedral capsid with a T=13 symmetry, which consists of 230 trimers of VP6, with channels at each of its five-fold vertices. This capsid constitutes the middle concentric layer of the viral mature particle. The innermost VP2 capsid and the intermediate VP6 capsid remain intact following cell entry to protect the dsRNA from degradation and to prevent unfavorable antiviral responses in the host cell during all the replication cycle of the virus. Nascent transcripts are transcribed within the structural confines of this double-layered particle (DLP) and are extruded through the channels at the five-fold axes. VP6 is required for the transcription activity of the DLP. The chain is Intermediate capsid protein VP6 from Homo sapiens (Human).